Here is a 54-residue protein sequence, read N- to C-terminus: Light-harvesting protein B-870 beta chain (54 aa).

At 1–20 (EVKQESLSGITEGEAKEFHK) the chain is on the cytoplasmic side. Positions 19 and 37 each coordinate a bacteriochlorophyll. The chain crosses the membrane as a helical span at residues 21 to 43 (IFTSSILVFFGVAAFAHLLVWIW). Over 44–54 (RPWVPGPNGYS) the chain is Periplasmic.

Belongs to the antenna complex beta subunit family. As to quaternary structure, the core complex is formed by different alpha and beta chains, binding bacteriochlorophyll molecules, and arranged most probably in tetrameric structures disposed around the reaction center. The non-pigmented gamma chains may constitute additional components.

Its subcellular location is the cell inner membrane. Functionally, antenna complexes are light-harvesting systems, which transfer the excitation energy to the reaction centers. The sequence is that of Light-harvesting protein B-870 beta chain from Rhodospirillum rubrum.